A 162-amino-acid chain; its full sequence is Interleukin-15 (162 aa).

The first 29 residues, 1 to 29, serve as a signal peptide directing secretion; the sequence is MRISKPHLRITSIQCYVCLLLNTHFLTEA. Residues 30-48 constitute a propeptide that is removed on maturation; that stretch reads GIRVFILGCISAGIPKTEA. Intrachain disulfides connect Cys83–Cys133 and Cys90–Cys136. 3 N-linked (GlcNAc...) asparagine glycosylation sites follow: Asn119, Asn127, and Asn143.

It belongs to the IL-15/IL-21 family.

The protein localises to the secreted. Functionally, cytokine that plays a major role in the development of inflammatory and protective immune responses to microbial invaders and parasites by modulating immune cells of both the innate and adaptive immune systems. Stimulates the proliferation of natural killer cells, T-cells and B-cells and promotes the secretion of several cytokines. In monocytes, induces the production of IL8 and monocyte chemotactic protein 1/CCL2, two chemokines that attract neutrophils and monocytes respectively to sites of infection. Unlike most cytokines, which are secreted in soluble form, IL15 is expressed in association with its high affinity IL15RA on the surface of IL15-producing cells and delivers signals to target cells that express IL2RB and IL2RG receptor subunits. Binding to its receptor triggers the phosphorylation of JAK1 and JAK3 and the recruitment and subsequent phosphorylation of signal transducer and activator of transcription-3/STAT3 and STAT5. In mast cells, induces the rapid tyrosine phosphorylation of STAT6 and thereby controls mast cell survival and release of cytokines such as IL4. This Marmota himalayana (Himalayan marmot) protein is Interleukin-15 (IL15).